A 130-amino-acid polypeptide reads, in one-letter code: Small ribosomal subunit protein uS9 (130 aa).

The protein belongs to the universal ribosomal protein uS9 family.

The protein is Small ribosomal subunit protein uS9 of Citrobacter koseri (strain ATCC BAA-895 / CDC 4225-83 / SGSC4696).